Here is a 293-residue protein sequence, read N- to C-terminus: AKT-interacting protein (293 aa).

A compositionally biased stretch (polar residues) spans 1–11; sequence MNPFWSMSTNA. A disordered region spans residues 1–44; the sequence is MNPFWSMSTNAGRKRSDGEEQSGSGEQRASPARPPFGKKQLPSI. The UBC core domain occupies 75-223; it reads YLEYSLLAEF…VVDSVKLCNS (149 aa). Residues 260-293 are disordered; it reads RPEDFNKGLPVSGLSWVKPGSTQPFSKEDNPLQT.

This sequence belongs to the ubiquitin-conjugating enzyme family. FTS subfamily.

It is found in the cytoplasm. It localises to the cell membrane. In terms of biological role, may function to promote vesicle trafficking and/or fusion. May also regulate apoptosis. The polypeptide is AKT-interacting protein (aktip) (Danio rerio (Zebrafish)).